The following is a 314-amino-acid chain: Thymidylate synthase (314 aa).

DUMP is bound by residues arginine 21 and 176–177 (RR). Cysteine 196 serves as the catalytic Nucleophile. Residues 216–219 (RSAD), asparagine 227, and 257–259 (HLY) each bind dUMP. Position 219 (aspartate 219) interacts with (6R)-5,10-methylene-5,6,7,8-tetrahydrofolate. Serine 313 is a (6R)-5,10-methylene-5,6,7,8-tetrahydrofolate binding site.

The protein belongs to the thymidylate synthase family. Bacterial-type ThyA subfamily. Homodimer.

It is found in the cytoplasm. It carries out the reaction dUMP + (6R)-5,10-methylene-5,6,7,8-tetrahydrofolate = 7,8-dihydrofolate + dTMP. Its pathway is pyrimidine metabolism; dTTP biosynthesis. Catalyzes the reductive methylation of 2'-deoxyuridine-5'-monophosphate (dUMP) to 2'-deoxythymidine-5'-monophosphate (dTMP) while utilizing 5,10-methylenetetrahydrofolate (mTHF) as the methyl donor and reductant in the reaction, yielding dihydrofolate (DHF) as a by-product. This enzymatic reaction provides an intracellular de novo source of dTMP, an essential precursor for DNA biosynthesis. This Listeria innocua serovar 6a (strain ATCC BAA-680 / CLIP 11262) protein is Thymidylate synthase.